Reading from the N-terminus, the 986-residue chain is Probable serine/threonine-protein kinase DDB_G0272092 (986 aa).

In terms of domain architecture, C2 spans 1–107 (MARKIGSVRI…EYIVDTTKWY (107 aa)). The Ca(2+) site is built by Asp-22, Asp-28, Asp-76, Asp-78, Ser-81, and Asp-84. ANK repeat units follow at residues 137-167 (PEKS…DYTI), 171-201 (EGTP…RVSI), 205-238 (HGNT…GIND), 242-274 (LGET…IINH), 278-307 (TRDT…NVMI), and 312-344 (PSRT…WLNE). Residues 333–396 (EKVIEISDWL…LRAVRKIKDP (64 aa)) enclose the SAM domain. The segment covering 412–438 (HVENDNNNNNNNNNNNNNSQEQCNINN) has biased composition (low complexity). Disordered stretches follow at residues 412 to 520 (HVEN…SNTT) and 532 to 574 (TTLT…PEGP). The span at 439-448 (DSLGSGNRNS) shows a compositional bias: polar residues. Low complexity predominate over residues 454 to 464 (QNQNNTLNNNN). A compositionally biased stretch (polar residues) spans 465–476 (VESKSTGNLNSL). 2 stretches are compositionally biased toward low complexity: residues 493-520 (NILS…SNTT) and 546-571 (TEST…TVTP). The Protein kinase domain maps to 601–870 (LTYNVLLGTG…ELLKIRDEYN (270 aa)). ATP-binding positions include 607 to 615 (LGTGASGKV) and Lys-628. Residue Asp-722 is the Proton acceptor of the active site. Composition is skewed to low complexity over residues 901-913 (DSNN…NNNN) and 928-947 (SNSN…SDNN). Residues 901-986 (DSNNINNNNN…SPMEPKSIKK (86 aa)) form a disordered region. Polar residues-rich tracts occupy residues 948 to 959 (ISEPATTDSITK) and 969 to 978 (LTRTRSSSSP).

It belongs to the protein kinase superfamily. TKL Ser/Thr protein kinase family. The cofactor is Ca(2+).

The enzyme catalyses L-seryl-[protein] + ATP = O-phospho-L-seryl-[protein] + ADP + H(+). It carries out the reaction L-threonyl-[protein] + ATP = O-phospho-L-threonyl-[protein] + ADP + H(+). This Dictyostelium discoideum (Social amoeba) protein is Probable serine/threonine-protein kinase DDB_G0272092.